A 69-amino-acid chain; its full sequence is Pantinin-1 (69 aa).

The signal sequence occupies residues 1–23 (MKTQFVILMITVILMQMLVQTEG). Val-37 carries the post-translational modification Valine amide. Residues 41–69 (GLNDRDQLDDLFDSDLSDADIKLLKEMFK) constitute a propeptide that is removed on maturation.

This sequence belongs to the non-disulfide-bridged peptide (NDBP) superfamily. Short antimicrobial peptide (group 4) family. Expressed by the venom gland.

Its subcellular location is the secreted. The protein localises to the target cell membrane. In terms of biological role, amphipathic peptide that possesses relatively strong activities against Gram-positive bacteria and a fungus, but has very weak antimicrobial activities against Gram-negative bacteria. Also exhibits very low hemolytic activities against human erythrocytes (64 uM induce 21% of hemolysis). Minimal inhibitory concentration (MIC) are the following: 8 uM against S.aureus, 32 uM against B.magaterium, 32 uM against M.luteus, 28 uM against vancomycin-resistant Enterococci, 14 uM against methicillin-resistant S.aureus, 62 uM against E.coli, &gt;87 uM against P.putida, &gt;87 uM against K.oxytoca, 76 uM against E.cloacae, 72 uM against S.enterica and 16 uM against the fungus C.tropicalis. The polypeptide is Pantinin-1 (Pandinus imperator (Emperor scorpion)).